Consider the following 182-residue polypeptide: MTQYFRSLAFFLLPVPATAMACDGWPSWARGACQRVDQIWNEGGNDLYLTGYSWHNRAMYSSDKIRSFNELAWGGGLGKSIYDEDGDWQGLYAMAFLDSHSDIEPIAGYGFQKIGRIGADTRLGIGYTVFLTSRSDIMSRVPFPGILPLVSAGYRDATLYATYIPGGKGNGNVLFMFGRWEF.

The first 21 residues, M1 to A21, serve as a signal peptide directing secretion. A lipid anchor (N-palmitoyl cysteine) is attached at C22. C22 is lipidated: S-diacylglycerol cysteine. Catalysis depends on residues H55, D98, and S99.

This sequence belongs to the lipid A palmitoyltransferase family. Homodimer.

Its subcellular location is the cell outer membrane. The enzyme catalyses a lipid A + a 1,2-diacyl-sn-glycero-3-phosphocholine = a hepta-acyl lipid A + a 2-acyl-sn-glycero-3-phosphocholine. The catalysed reaction is a lipid IVA + a 1,2-diacyl-sn-glycero-3-phosphocholine = a lipid IVB + a 2-acyl-sn-glycero-3-phosphocholine. It carries out the reaction a lipid IIA + a 1,2-diacyl-sn-glycero-3-phosphocholine = a lipid IIB + a 2-acyl-sn-glycero-3-phosphocholine. Transfers a fatty acid residue from the sn-1 position of a phospholipid to the N-linked hydroxyfatty acid chain on the proximal unit of lipid A or its precursors. This Bordetella pertussis (strain CS) protein is Lipid A acyltransferase PagP.